A 253-amino-acid chain; its full sequence is 3-deoxy-manno-octulosonate cytidylyltransferase (253 aa).

The protein belongs to the KdsB family.

Its subcellular location is the cytoplasm. It carries out the reaction 3-deoxy-alpha-D-manno-oct-2-ulosonate + CTP = CMP-3-deoxy-beta-D-manno-octulosonate + diphosphate. It participates in nucleotide-sugar biosynthesis; CMP-3-deoxy-D-manno-octulosonate biosynthesis; CMP-3-deoxy-D-manno-octulosonate from 3-deoxy-D-manno-octulosonate and CTP: step 1/1. It functions in the pathway bacterial outer membrane biogenesis; lipopolysaccharide biosynthesis. Functionally, activates KDO (a required 8-carbon sugar) for incorporation into bacterial lipopolysaccharide in Gram-negative bacteria. The sequence is that of 3-deoxy-manno-octulosonate cytidylyltransferase from Neisseria meningitidis serogroup A / serotype 4A (strain DSM 15465 / Z2491).